We begin with the raw amino-acid sequence, 473 residues long: UDP-N-acetylmuramate--L-alanine ligase (473 aa).

123 to 129 (GSHGKTS) lines the ATP pocket.

It belongs to the MurCDEF family.

It localises to the cytoplasm. It carries out the reaction UDP-N-acetyl-alpha-D-muramate + L-alanine + ATP = UDP-N-acetyl-alpha-D-muramoyl-L-alanine + ADP + phosphate + H(+). It functions in the pathway cell wall biogenesis; peptidoglycan biosynthesis. Cell wall formation. The polypeptide is UDP-N-acetylmuramate--L-alanine ligase (Prochlorococcus marinus subsp. pastoris (strain CCMP1986 / NIES-2087 / MED4)).